Consider the following 258-residue polypeptide: Probable parvulin-type peptidyl-prolyl cis-trans isomerase (258 aa).

The signal sequence occupies residues 1-19 (MKRIAMLAAACVIAVPAFA). The region spanning 127-219 (KMEYKVRHIL…FGWHVIQVDD (93 aa)) is the PpiC domain.

It belongs to the PpiC/parvulin rotamase family.

The catalysed reaction is [protein]-peptidylproline (omega=180) = [protein]-peptidylproline (omega=0). In Bordetella parapertussis (strain 12822 / ATCC BAA-587 / NCTC 13253), this protein is Probable parvulin-type peptidyl-prolyl cis-trans isomerase.